A 354-amino-acid chain; its full sequence is NADH-quinone oxidoreductase subunit H (354 aa).

Helical transmembrane passes span 22-42 (ILIR…YLIL), 91-111 (YLIA…VIPF), 124-144 (LLYV…AGWA), 168-188 (MGFA…SAIV), 203-223 (VLSW…ISGV), 255-275 (LFFL…ALLF), 291-311 (IPGF…FIWI), and 326-346 (LGWK…AIWI).

It belongs to the complex I subunit 1 family. As to quaternary structure, NDH-1 is composed of 14 different subunits. Subunits NuoA, H, J, K, L, M, N constitute the membrane sector of the complex.

The protein localises to the cell inner membrane. It carries out the reaction a quinone + NADH + 5 H(+)(in) = a quinol + NAD(+) + 4 H(+)(out). Functionally, NDH-1 shuttles electrons from NADH, via FMN and iron-sulfur (Fe-S) centers, to quinones in the respiratory chain. The immediate electron acceptor for the enzyme in this species is believed to be ubiquinone. Couples the redox reaction to proton translocation (for every two electrons transferred, four hydrogen ions are translocated across the cytoplasmic membrane), and thus conserves the redox energy in a proton gradient. This subunit may bind ubiquinone. This chain is NADH-quinone oxidoreductase subunit H, found in Cupriavidus pinatubonensis (strain JMP 134 / LMG 1197) (Cupriavidus necator (strain JMP 134)).